We begin with the raw amino-acid sequence, 288 residues long: Glucose-1-phosphate thymidylyltransferase (288 aa).

Position 8 (Gly-8) interacts with dTDP-alpha-D-glucose. Residues Gly-8, Gly-11, Thr-12, Arg-13, Lys-23, Gln-24, Gln-80, Gly-85, and Asp-108 each contribute to the dTTP site. Positions 23, 24, 80, 85, 108, 109, 143, 158, 159, 169, and 222 each coordinate dTDP-alpha-D-glucose. Position 108 (Asp-108) interacts with Mg(2+). Asp-222 is a Mg(2+) binding site.

The protein belongs to the glucose-1-phosphate thymidylyltransferase family. Mg(2+) is required as a cofactor.

It carries out the reaction dTTP + alpha-D-glucose 1-phosphate + H(+) = dTDP-alpha-D-glucose + diphosphate. The protein operates within carbohydrate biosynthesis; dTDP-L-rhamnose biosynthesis. Functionally, catalyzes the conversion of glucose-1-phosphate and dTTP to dTDP-glucose and pyrophosphate. Involved in the biosynthesis of the dTDP-L-rhamnose which is a component of the critical linker, D-N-acetylglucosamine-L-rhamnose disaccharide, which connects the galactan region of arabinogalactan to peptidoglycan via a phosphodiester linkage. The polypeptide is Glucose-1-phosphate thymidylyltransferase (rmlA) (Mycobacterium tuberculosis (strain CDC 1551 / Oshkosh)).